The sequence spans 636 residues: Eukaryotic peptide chain release factor GTP-binding subunit ERF3A (636 aa).

2 stretches are compositionally biased toward gly residues: residues 1–16 (MDPS…GGGS) and 103–116 (AAGG…GAGG). Disordered regions lie at residues 1 to 54 (MDPS…AAVA) and 90 to 206 (LRGP…PPGA). Positions 121 to 138 (VESSQDQSCEGSNSTVSM) are enriched in polar residues. Residues 183–193 (STQEMMEEEEE) show a composition bias toward acidic residues. In terms of domain architecture, tr-type G spans 209–435 (KEHVNVVFIG…DNLPNFNRSV (227 aa)). The segment at 218–225 (GHVDAGKS) is G1. Residue 221-226 (DAGKST) coordinates GTP. Positions 274–278 (GKTVE) are G2. A G3 region spans residues 295 to 298 (DAPG). GTP is bound by residues 357-360 (NKMD) and 399-401 (SGL). The interval 357–360 (NKMD) is G4. Positions 399–401 (SGL) are G5.

The protein belongs to the TRAFAC class translation factor GTPase superfamily. Classic translation factor GTPase family. ERF3 subfamily. In terms of assembly, component of the eRF1-eRF3-GTP ternary complex, composed of ETF1/ERF1 and ERF3 (GSPT1/ERF3A or GSPT2/ERF3B) and GTP. Component of the transient SURF (SMG1-UPF1-eRF1-eRF3) complex. The ETF1-GSPT1 complex interacts with JMJD4. Interacts with PABPC1. Interacts with SHFL.

The catalysed reaction is GTP + H2O = GDP + phosphate + H(+). In terms of biological role, GTPase component of the eRF1-eRF3-GTP ternary complex, a ternary complex that mediates translation termination in response to the termination codons UAA, UAG and UGA. GSPT1/ERF3A mediates ETF1/ERF1 delivery to stop codons: The eRF1-eRF3-GTP complex binds to a stop codon in the ribosomal A-site. GTP hydrolysis by GSPT1/ERF3A induces a conformational change that leads to its dissociation, permitting ETF1/ERF1 to accommodate fully in the A-site. Component of the transient SURF complex which recruits UPF1 to stalled ribosomes in the context of nonsense-mediated decay (NMD) of mRNAs containing premature stop codons. Required for SHFL-mediated translation termination which inhibits programmed ribosomal frameshifting (-1PRF) of mRNA from viruses and cellular genes. The chain is Eukaryotic peptide chain release factor GTP-binding subunit ERF3A (Gspt1) from Mus musculus (Mouse).